The sequence spans 77 residues: Sec-independent protein translocase protein TatA (77 aa).

A helical membrane pass occupies residues 1–21 (MGSFSIWHWLIVLVIVMLVFG). A disordered region spans residues 40–77 (KDGMKEGNTDEPATPTPAKELRDSTTIDVEAKEKSRQQ). The segment covering 58–77 (KELRDSTTIDVEAKEKSRQQ) has biased composition (basic and acidic residues).

The protein belongs to the TatA/E family. The Tat system comprises two distinct complexes: a TatABC complex, containing multiple copies of TatA, TatB and TatC subunits, and a separate TatA complex, containing only TatA subunits. Substrates initially bind to the TatABC complex, which probably triggers association of the separate TatA complex to form the active translocon.

It is found in the cell inner membrane. Part of the twin-arginine translocation (Tat) system that transports large folded proteins containing a characteristic twin-arginine motif in their signal peptide across membranes. TatA could form the protein-conducting channel of the Tat system. In Cupriavidus metallidurans (strain ATCC 43123 / DSM 2839 / NBRC 102507 / CH34) (Ralstonia metallidurans), this protein is Sec-independent protein translocase protein TatA.